The primary structure comprises 557 residues: Membrane protein insertase YidC (557 aa).

The helical transmembrane segment at asparagine 3–tryptophan 23 threads the bilayer. A disordered region spans residues alanine 34–serine 60. The next 4 helical transmembrane spans lie at valine 366–tyrosine 386, leucine 436–leucine 456, tyrosine 480–alanine 500, and proline 514–valine 534.

Belongs to the OXA1/ALB3/YidC family. Type 1 subfamily. In terms of assembly, interacts with the Sec translocase complex via SecD. Specifically interacts with transmembrane segments of nascent integral membrane proteins during membrane integration.

The protein resides in the cell inner membrane. Required for the insertion and/or proper folding and/or complex formation of integral membrane proteins into the membrane. Involved in integration of membrane proteins that insert both dependently and independently of the Sec translocase complex, as well as at least some lipoproteins. Aids folding of multispanning membrane proteins. In Thioalkalivibrio sulfidiphilus (strain HL-EbGR7), this protein is Membrane protein insertase YidC.